The sequence spans 160 residues: UPF0262 protein BSUIS_A0274 (160 aa).

This sequence belongs to the UPF0262 family.

This chain is UPF0262 protein BSUIS_A0274, found in Brucella suis (strain ATCC 23445 / NCTC 10510).